A 480-amino-acid polypeptide reads, in one-letter code: 2-phosphoxylose phosphatase 1 (480 aa).

The Cytoplasmic portion of the chain corresponds to 1–6 (MLYRNR). A helical; Signal-anchor for type II membrane protein transmembrane segment spans residues 7–27 (FLVLLALAGLLAFLSLSLQFF). The Lumenal portion of the chain corresponds to 28–480 (HLIPVSTTKN…YYDACHGEGA (453 aa)). His97 serves as the catalytic Nucleophile. Asn194, Asn305, and Asn354 each carry an N-linked (GlcNAc...) asparagine glycan. Asp379 serves as the catalytic Proton donor.

This sequence belongs to the histidine acid phosphatase family. Interacts with B3GAT3; the interaction increases the 2-phosphoxylose phosphatase activity of PXYLP1 during completion of linkage region formation in a B3GAT3-mediated manner.

It localises to the golgi apparatus membrane. The catalysed reaction is 3-O-[beta-D-GlcA-(1-&gt;3)-beta-D-Gal-(1-&gt;3)-beta-D-Gal-(1-&gt;4)-beta-D-2-O-P-Xyl]-L-seryl-[protein] + H2O = 3-O-(beta-D-GlcA-(1-&gt;3)-beta-D-Gal-(1-&gt;3)-beta-D-Gal-(1-&gt;4)-beta-D-Xyl)-L-seryl-[protein] + phosphate. Its function is as follows. Responsible for the 2-O-dephosphorylation of xylose in the glycosaminoglycan-protein linkage region of proteoglycans thereby regulating the amount of mature glycosaminoglycan (GAG) chains. Sulfated glycosaminoglycans (GAGs), including heparan sulfate and chondroitin sulfate, are synthesized on the so-called common GAG-protein linkage region (GlcUAbeta1-3Galbeta1-3Galbeta1-4Xylbeta1-O-Ser) of core proteins, which is formed by the stepwise addition of monosaccharide residues by the respective specific glycosyltransferases. Xylose 2-O-dephosphorylation during completion of linkage region formation is a prerequisite for the initiation and efficient elongation of the repeating disaccharide region of GAG chains. The polypeptide is 2-phosphoxylose phosphatase 1 (Rattus norvegicus (Rat)).